The primary structure comprises 312 residues: ADIPOR-like receptor IZH4 (312 aa).

The interval 1-38 (MVSLTTIEQSPVKCETTTEKESNDTRGTDSNENAETKE) is disordered. The Cytoplasmic portion of the chain corresponds to 1–64 (MVSLTTIEQS…YKNKSSRNES (64 aa)). A compositionally biased stretch (basic and acidic residues) spans 16–38 (TTTEKESNDTRGTDSNENAETKE). The helical transmembrane segment at 65–85 (LVALIYLLGSMLSFCLLIFFT) threads the bilayer. At 86–101 (DFYLIPLFPTTTTMTD) the chain is on the lumenal side. Residues 102–122 (YIVFNFYLLNVFVFCMVHFIY) form a helical membrane-spanning segment. The Cytoplasmic portion of the chain corresponds to 123–141 (HFVKNISLQQHLEHWQKFS). A helical transmembrane segment spans residues 142–162 (YLSNINLLISSQITILYYLFY). Topologically, residues 163–165 (DYV) are lumenal. A helical membrane pass occupies residues 166-186 (FFFKIFTLLMNFIGLVAYFFI). Residues 187 to 201 (LTDKLISSKRFNKTV) are Cytoplasmic-facing. The helical transmembrane segment at 202-222 (FFISVSVVCCSLPLLTAIITF) threads the bilayer. The Lumenal segment spans residues 223-231 (DGLENLKER). Residues 232 to 252 (IKVNAITWELVALVAASIIYV) traverse the membrane as a helical segment. The Cytoplasmic segment spans residues 253–277 (TRFPESLFRRNKKEEGWNHSEYLFH). A helical membrane pass occupies residues 278–298 (LLISGTAFYHFFILIQSYILM). Residues 299-312 (HSSLNQPELINFKS) are Lumenal-facing.

Belongs to the ADIPOR family.

It localises to the endoplasmic reticulum membrane. Its function is as follows. ADIPOR-like receptor involved in zinc metabolism either by altering membrane sterol content or by directly altering cellular zinc levels. This Saccharomyces cerevisiae (strain ATCC 204508 / S288c) (Baker's yeast) protein is ADIPOR-like receptor IZH4 (IZH4).